Reading from the N-terminus, the 796-residue chain is Protein translocase subunit SecA 2 (796 aa).

Residues glutamine 84, 102 to 106, and aspartate 496 contribute to the ATP site; that span reads GEGKT.

It belongs to the SecA family. As to quaternary structure, monomer and homodimer. Part of the essential Sec protein translocation apparatus which comprises SecA, SecYEG and auxiliary proteins SecDF. Other proteins may also be involved.

It localises to the cell membrane. The protein localises to the cytoplasm. The enzyme catalyses ATP + H2O + cellular proteinSide 1 = ADP + phosphate + cellular proteinSide 2.. In terms of biological role, part of the Sec protein translocase complex. Interacts with the SecYEG preprotein conducting channel. Has a central role in coupling the hydrolysis of ATP to the transfer of proteins into and across the cell membrane, serving as an ATP-driven molecular motor driving the stepwise translocation of polypeptide chains across the membrane. The protein is Protein translocase subunit SecA 2 of Staphylococcus aureus (strain Mu3 / ATCC 700698).